Here is a 151-residue protein sequence, read N- to C-terminus: Small ribosomal subunit protein uS11 (151 aa).

Position 16 is a phosphoserine (Ser16). Residues Lys61, Lys63, and Lys106 each participate in a glycyl lysine isopeptide (Lys-Gly) (interchain with G-Cter in SUMO2) cross-link. The disordered stretch occupies residues Asp131–Leu151. A Phosphothreonine modification is found at Thr133. Position 139 is a phosphoserine (Ser139). Basic residues predominate over residues Arg142–Leu151.

It belongs to the universal ribosomal protein uS11 family. In terms of assembly, component of the small ribosomal subunit. Part of the small subunit (SSU) processome, composed of more than 70 proteins and the RNA chaperone small nucleolar RNA (snoRNA) U3.

It localises to the cytoplasm. The protein resides in the nucleus. The protein localises to the nucleolus. In terms of biological role, component of the small ribosomal subunit. The ribosome is a large ribonucleoprotein complex responsible for the synthesis of proteins in the cell. Part of the small subunit (SSU) processome, first precursor of the small eukaryotic ribosomal subunit. During the assembly of the SSU processome in the nucleolus, many ribosome biogenesis factors, an RNA chaperone and ribosomal proteins associate with the nascent pre-rRNA and work in concert to generate RNA folding, modifications, rearrangements and cleavage as well as targeted degradation of pre-ribosomal RNA by the RNA exosome. The polypeptide is Small ribosomal subunit protein uS11 (Rps14) (Mus musculus (Mouse)).